We begin with the raw amino-acid sequence, 1133 residues long: Roquin-1 (1133 aa).

Positions 14, 17, 33, 35, 38, 50, and 53 each coordinate Zn(2+). Residues 14–54 (CPICTQTFDETIRKPISLGCGHTVCKMCLNKLHRKACPFDQ) form an RING-type; degenerate zinc finger. An HEPN-N region spans residues 89–173 (GVEDTKHYEE…RTVTELILQH (85 aa)). Positions 174 to 326 (QNPQQLSSNL…MQSIIDKLQT (153 aa)) are ROQ. The HEPN-C stretch occupies residues 327-396 (PASFAQSVQE…VVHGLVDYIQ (70 aa)). The C3H1-type zinc-finger motif lies at 413-441 (KYKTYMCRDMKQRGGCPRGASCTFAHSQE). Ser-462, Ser-531, Ser-535, and Ser-863 each carry phosphoserine. The interval 505-542 (TQLIPRGTDPSYDSSLKPGKIDHLSSSAPGSPPDLLES) is disordered. Disordered stretches follow at residues 1000–1019 (NTLA…WPGM), 1058–1078 (NTSK…PAED), and 1094–1133 (QENI…SSAP). Pro residues predominate over residues 1007–1016 (QPPPPPPPKW). The segment covering 1058–1070 (NTSKQAENGQPEP) has biased composition (polar residues). A compositionally biased stretch (low complexity) spans 1096-1110 (NISLLSNKTSSLNLS). Phosphoserine is present on Ser-1110. Polar residues predominate over residues 1119-1133 (NNDSQRSGVTPSSAP).

In terms of assembly, able to homodimerize. Interacts with DDX6 and EDC4. Interacts with CCR4-NOT deadenylase complex. Interacts with RC3H1; the interaction is RNA independent. Post-translationally, proteolytically cleaved after Arg-510 and Arg-579 by MALT1 in activated CD4(+) T cells; cleavage at Arg-510 and Arg-579 is critical for promoting RC3H1 degradation in response to T-cell receptor (TCR) stimulation, and hence is necessary for prolonging the stability of a set of mRNAs controlling Th17 cell differentiation. Widely expressed. Expressed at higher level in cerebellum, spleen, ovary and liver.

It localises to the cytoplasm. The protein localises to the P-body. Its subcellular location is the cytoplasmic granule. The catalysed reaction is S-ubiquitinyl-[E2 ubiquitin-conjugating enzyme]-L-cysteine + [acceptor protein]-L-lysine = [E2 ubiquitin-conjugating enzyme]-L-cysteine + N(6)-ubiquitinyl-[acceptor protein]-L-lysine.. The protein operates within protein modification; protein ubiquitination. Its function is as follows. Post-transcriptional repressor of mRNAs containing a conserved stem loop motif, called constitutive decay element (CDE), which is often located in the 3'-UTR, as in HMGXB3, ICOS, IER3, NFKBID, NFKBIZ, PPP1R10, TNF, TNFRSF4 and in many more mRNAs. Cleaves translationally inactive mRNAs harboring a stem-loop (SL), often located in their 3'-UTRs, during the early phase of inflammation in a helicase UPF1-independent manner. Binds to CDE and promotes mRNA deadenylation and degradation. This process does not involve miRNAs. In follicular helper T (Tfh) cells, represses of ICOS and TNFRSF4 expression, thus preventing spontaneous Tfh cell differentiation, germinal center B-cell differentiation in the absence of immunization and autoimmunity. In resting or LPS-stimulated macrophages, controls inflammation by suppressing TNF expression. Also recognizes CDE in its own mRNA and in that of paralogous RC3H2, possibly leading to feedback loop regulation. Recognizes and binds mRNAs containing a hexaloop stem-loop motif, called alternative decay element (ADE). Together with ZC3H12A, destabilizes TNFRSF4/OX40 mRNA by binding to the conserved stem loop structure in its 3'UTR. Able to interact with double-stranded RNA (dsRNA). miRNA-binding protein that regulates microRNA homeostasis. Enhances DICER-mediated processing of pre-MIR146a but reduces mature MIR146a levels through an increase of 3' end uridylation. Both inhibits ICOS mRNA expression and they may act together to exert the suppression. Acts as a ubiquitin E3 ligase. Pairs with E2 enzymes UBE2A, UBE2B, UBE2D2, UBE2F, UBE2G1, UBE2G2 and UBE2L3 and produces polyubiquitin chains. Shows the strongest activity when paired with UBE2N:UBE2V1 or UBE2N:UBE2V2 E2 complexes and generate both short and long polyubiquitin chains. This is Roquin-1 from Homo sapiens (Human).